Here is a 63-residue protein sequence, read N- to C-terminus: MAVPARKTSKQKKRSRRGHIKLTTPAMHYDATTGEYRLSHRVSPKGFYKGRQVANENKQQNND.

Disordered regions lie at residues 1–25 and 42–63; these read MAVPARKTSKQKKRSRRGHIKLTTP and VSPKGFYKGRQVANENKQQNND. Basic residues predominate over residues 7–20; that stretch reads KTSKQKKRSRRGHI. The segment covering 54-63 has biased composition (polar residues); that stretch reads ANENKQQNND.

The protein belongs to the bacterial ribosomal protein bL32 family.

This chain is Large ribosomal subunit protein bL32, found in Lactobacillus johnsonii (strain CNCM I-12250 / La1 / NCC 533).